The sequence spans 154 residues: Transcriptional repressor NrdR (154 aa).

The segment at 3-34 (CPFCRHPDSRVIDSRETDEGQAIRRRRSCPEC) is a zinc-finger region. Residues 46 to 136 (LAVVKRSGVT…VYRSFSSADD (91 aa)) enclose the ATP-cone domain.

Belongs to the NrdR family. The cofactor is Zn(2+).

Negatively regulates transcription of bacterial ribonucleotide reductase nrd genes and operons by binding to NrdR-boxes. The sequence is that of Transcriptional repressor NrdR from Mycobacterium bovis (strain ATCC BAA-935 / AF2122/97).